We begin with the raw amino-acid sequence, 725 residues long: Exocyst complex component 8 (725 aa).

S19 bears the Phosphoserine mark. The tract at residues 137–159 (AGFFSTPGGASRDGSGPGEEGKQ) is disordered. T142 carries the post-translational modification Phosphothreonine. One can recognise a PH domain in the interval 182-282 (YLVYNGDLVE…WLEVLEDTKR (101 aa)). A disordered region spans residues 285–328 (SEKRRREQEEAAAPRGPPQVTSKATNPFEDDEEEEPAVPEVEEE). Over residues 312-328 (FEDDEEEEPAVPEVEEE) the composition is skewed to acidic residues.

The protein belongs to the EXO84 family. In terms of assembly, the exocyst complex is composed of EXOC1, EXOC2, EXOC3, EXOC4, EXOC5, EXOC6, EXOC7 and EXOC8. Interacts (via PH domain) with GTP-bound RALA and RALB. Interacts with SH3BP1; required for the localization of both SH3BP1 and the exocyst to the leading edge of migrating cells.

Its subcellular location is the cytoplasm. The protein resides in the perinuclear region. It is found in the cell projection. The protein localises to the growth cone. Its function is as follows. Component of the exocyst complex involved in the docking of exocytic vesicles with fusion sites on the plasma membrane. This Homo sapiens (Human) protein is Exocyst complex component 8 (EXOC8).